Here is a 1482-residue protein sequence, read N- to C-terminus: Cystic fibrosis transmembrane conductance regulator (1482 aa).

The Cytoplasmic segment spans residues Met-1–Phe-77. Residues Phe-78 to Gln-98 form a helical membrane-spanning segment. Positions Phe-81–Leu-365 constitute an ABC transmembrane type-1 1 domain. Residues Pro-99 to Tyr-122 are Extracellular-facing. The chain crosses the membrane as a helical span at residues Leu-123–His-146. At His-147 to Leu-195 the chain is on the cytoplasmic side. The chain crosses the membrane as a helical span at residues Ala-196–Trp-216. The Extracellular portion of the chain corresponds to Asp-217–Ser-222. Residues Ala-223–Met-243 traverse the membrane as a helical segment. Residues Met-244–Lys-298 lie on the Cytoplasmic side of the membrane. Residues Ala-299–Phe-319 form a helical membrane-spanning segment. At Leu-320 to Thr-339 the chain is on the extracellular side. A helical membrane pass occupies residues Ile-340 to Val-358. Over Gln-359–Ser-858 the chain is Cytoplasmic. ATP contacts are provided by residues Trp-401, Ser-434, Gly-458 to Thr-465, and Gln-493. An ABC transporter 1 domain is found at Asn-423–Gly-646. Cys-524 carries S-palmitoyl cysteine lipidation. Phosphoserine is present on residues Ser-549 and Ser-660. The tract at residues Ser-654 to Glu-831 is disordered R region. The residue at position 670 (Ser-670) is a Phosphoserine; by PKA. Ser-685 bears the Phosphoserine mark. A Glycyl lysine isopeptide (Lys-Gly) (interchain with G-Cter in ubiquitin) cross-link involves residue Lys-687. Residues Ser-699 and Ser-711 each carry the phosphoserine modification. Thr-716 carries the post-translational modification Phosphothreonine. Phosphoserine occurs at positions 736, 767, 790, 795, and 813. A helical transmembrane segment spans residues Leu-859–Val-879. The ABC transmembrane type-1 2 domain maps to Leu-859–Ser-1156. Residues Val-880–Ile-919 are Extracellular-facing. Asn-894, Asn-895, Asn-901, and Asn-910 each carry an N-linked (GlcNAc...) asparagine glycan. The chain crosses the membrane as a discontinuously helical span at residues Tyr-920–His-940. The Cytoplasmic portion of the chain corresponds to Thr-941–Thr-991. The chain crosses the membrane as a helical span at residues Met-992–Leu-1012. The Extracellular segment spans residues Gln-1013 to Pro-1014. A helical membrane pass occupies residues Tyr-1015 to Leu-1035. The Cytoplasmic portion of the chain corresponds to His-1036–Thr-1096. Residues Leu-1097–Phe-1117 traverse the membrane as a helical segment. Topologically, residues Val-1118 to Gly-1131 are extracellular. The helical transmembrane segment at Ile-1132–Ile-1152 threads the bilayer. Topologically, residues Asp-1153–Leu-1482 are cytoplasmic. Positions Met-1212 to Pro-1445 constitute an ABC transporter 2 domain. Residues Tyr-1221 and Gly-1246 to Ser-1253 contribute to the ATP site. The tract at residues Arg-1388–Leu-1482 is interaction with GORASP2. Cys-1397 is lipidated: S-palmitoyl cysteine. The span at His-1454–Arg-1463 shows a compositional bias: basic residues. Positions His-1454 to Leu-1482 are disordered. Ser-1458 carries the phosphoserine modification. Acidic residues predominate over residues Glu-1472–Leu-1482. Positions Thr-1480 to Leu-1482 match the PDZ-binding motif.

It belongs to the ABC transporter superfamily. ABCC family. CFTR transporter (TC 3.A.1.202) subfamily. Monomer; does not require oligomerization for channel activity. May form oligomers in the membrane. Interacts with SLC26A3, SLC26A6 and NHERF1. Interacts with SHANK2. Interacts with MYO6. Interacts (via C-terminus) with GOPC (via PDZ domain); this promotes CFTR internalization and thereby decreases channel activity. Interacts with SLC4A7 through NHERF1. Found in a complex with MYO5B and RAB11A. Interacts with ANO1. Interacts with SLC26A8. Interacts with AHCYL1; the interaction increases CFTR activity. Interacts with CSE1L. The core-glycosylated form interacts with GORASP2 (via PDZ GRASP-type 1 domain) in respone to ER stress. Interacts with MARCHF2; the interaction leads to CFTR ubiqtuitination and degradation. Interacts with ADGRG2. Post-translationally, N-glycosylated. In terms of processing, phosphorylated; cAMP treatment promotes phosphorylation and activates the channel. Dephosphorylation decreases the ATPase activity (in vitro). Phosphorylation at PKA sites activates the channel. Phosphorylation at PKC sites enhances the response to phosphorylation by PKA. Phosphorylated by AMPK; this inhibits channel activity. Ubiquitinated, leading to its degradation in the lysosome. Deubiquitination by USP10 in early endosomes enhances its endocytic recycling to the cell membrane. Ubiquitinated by RNF185 during ER stress. Ubiquitinated by MARCHF2.

It localises to the apical cell membrane. The protein localises to the early endosome membrane. Its subcellular location is the cell membrane. The protein resides in the recycling endosome membrane. It is found in the endoplasmic reticulum membrane. It localises to the nucleus. The enzyme catalyses ATP + H2O + closed Cl(-) channel = ADP + phosphate + open Cl(-) channel.. It catalyses the reaction chloride(in) = chloride(out). It carries out the reaction hydrogencarbonate(in) = hydrogencarbonate(out). The catalysed reaction is ATP + H2O = ADP + phosphate + H(+). Functionally, epithelial ion channel that plays an important role in the regulation of epithelial ion and water transport and fluid homeostasis. Mediates the transport of chloride ions across the cell membrane. Possesses an intrinsic ATPase activity and utilizes ATP to gate its channel; the passive flow of anions through the channel is gated by cycles of ATP binding and hydrolysis by the ATP-binding domains. The ion channel is also permeable to HCO(3)(-); selectivity depends on the extracellular chloride concentration. Exerts its function also by modulating the activity of other ion channels and transporters. Contributes to the regulation of the pH and the ion content of the epithelial fluid layer. Modulates the activity of the epithelial sodium channel (ENaC) complex, in part by regulating the cell surface expression of the ENaC complex. May regulate bicarbonate secretion and salvage in epithelial cells by regulating the transporter SLC4A7. Can inhibit the chloride channel activity of ANO1. Plays a role in the chloride and bicarbonate homeostasis during sperm epididymal maturation and capacitation. This is Cystic fibrosis transmembrane conductance regulator from Loxodonta africana (African elephant).